The following is a 553-amino-acid chain: HTH-type transcriptional regulator SgrR (553 aa).

The 113-residue stretch at 1–113 (MSTSRLQQQF…RQMLLSQLGR (113 aa)) folds into the HTH marR-type domain. A DNA-binding region (H-T-H motif) is located at residues 26 to 49 (LQALAEVLNCSRRHVRSLLGKMQH). Residues 163-494 (ELEPDLSHHW…EELHQDIESW (332 aa)) form a solute-binding region.

Activates the small RNA gene sgrS under glucose-phosphate stress conditions as well as yfdZ. Represses its own transcription under both stress and non-stress conditions. Might act as a sensor of the intracellular accumulation of phosphoglucose by binding these molecules in its C-terminal solute-binding domain. In Yersinia pseudotuberculosis serotype I (strain IP32953), this protein is HTH-type transcriptional regulator SgrR.